The following is a 254-amino-acid chain: Flagellar L-ring protein 1 (254 aa).

The signal sequence occupies residues 1–26; it reads MSPFSSAFRPRRIAISALLLAIGALA.

Belongs to the FlgH family. The basal body constitutes a major portion of the flagellar organelle and consists of four rings (L,P,S, and M) mounted on a central rod.

Its subcellular location is the cell outer membrane. The protein resides in the bacterial flagellum basal body. Its function is as follows. Assembles around the rod to form the L-ring and probably protects the motor/basal body from shearing forces during rotation. The chain is Flagellar L-ring protein 1 (flgH1) from Bradyrhizobium diazoefficiens (strain JCM 10833 / BCRC 13528 / IAM 13628 / NBRC 14792 / USDA 110).